Here is a 1315-residue protein sequence, read N- to C-terminus: Activating molecule in BECN1-regulated autophagy protein 1A (1315 aa).

3 WD repeats span residues Asp50 to Ser89, Gly92 to Leu132, and Glu134 to Lys174. Disordered stretches follow at residues Arg294–Glu322, Phe342–Gly409, Phe426–Ile463, Asn502–His526, Ser545–Gln610, Val630–Tyr660, Arg681–Ala736, His985–Gln1134, Gly1181–Leu1208, and Leu1286–Arg1315. The segment covering Asn351 to Gly360 has biased composition (polar residues). Basic and acidic residues predominate over residues Pro378 to Gly388. Polar residues-rich tracts occupy residues Ser394 to Gly409 and Phe426 to Ser435. Composition is skewed to polar residues over residues Gly552–Glu581 and Gln633–Leu647. Low complexity predominate over residues Arg696–Ser715. The span at Ser716 to Glu725 shows a compositional bias: acidic residues. Residues Pro1009–Ser1021 show a composition bias toward low complexity. Over residues Arg1022 to Ile1031 the composition is skewed to basic and acidic residues. Over residues Ser1047–Leu1060 the composition is skewed to polar residues. 2 consecutive short sequence motifs (TQT motif) follow at residues Thr1053–Thr1055 and Thr1065–Thr1067. A compositionally biased stretch (basic and acidic residues) spans Gln1061–Pro1072. The segment covering Gln1076–Thr1090 has biased composition (polar residues). The span at Glu1091–Gly1103 shows a compositional bias: acidic residues. 2 stretches are compositionally biased toward polar residues: residues Ser1125–Gln1134 and Gly1181–Arg1193. The span at Leu1286–Ser1307 shows a compositional bias: low complexity.

This sequence belongs to the WD repeat AMBRA1 family. As to quaternary structure, component of the DCX(AMBRA1) E3 ubiquitin ligase complex.

It localises to the endoplasmic reticulum. Its subcellular location is the cytoplasm. The protein localises to the cytoskeleton. The protein resides in the cytoplasmic vesicle. It is found in the autophagosome. It localises to the mitochondrion. Its subcellular location is the cytosol. The protein localises to the nucleus. The protein resides in the cell junction. It is found in the focal adhesion. It functions in the pathway protein modification; protein ubiquitination. Substrate-recognition component of a DCX (DDB1-CUL4-X-box) E3 ubiquitin-protein ligase complex involved in cell cycle control and autophagy. The DCX(AMBRA1) complex specifically mediates the polyubiquitination of target proteins. Acts as an upstream master regulator of the transition from G1 to S cell phase: ambra1a specifically recognizes and binds phosphorylated cyclin-D (ccnd1, ccnd2 and ccnd3), leading to cyclin-D ubiquitination by the DCX(AMBRA1) complex and subsequent degradation. Acts as a regulator of Cul5-RING (CRL5) E3 ubiquitin-protein ligase complexes by mediating ubiquitination and degradation of Elongin-C (eloc) component of CRL5 complexes. Acts as a key regulator of autophagy by modulating the BECN1-PIK3C3 complex: controls protein turnover during neuronal development, and regulates normal cell survival and proliferation. In normal conditions, ambra1a is tethered to the cytoskeleton via interaction with dyneins light chains. Upon autophagy induction, ambra1a is released from the cytoskeletal docking site to induce autophagosome nucleation by mediating ubiquitination of proteins involved in autophagy. Also acts as an activator of mitophagy. Required for skeletal muscle development. This Danio rerio (Zebrafish) protein is Activating molecule in BECN1-regulated autophagy protein 1A.